A 143-amino-acid chain; its full sequence is Deoxyuridine 5'-triphosphate nucleotidohydrolase (143 aa).

4 residues coordinate dUMP: Ser-65, Val-78, Arg-132, and Gly-138.

The protein belongs to the dUTPase family. As to quaternary structure, homotrimer. Requires Mg(2+) as cofactor.

It carries out the reaction dUTP + H2O = dUMP + diphosphate + H(+). Its pathway is pyrimidine metabolism; dUMP biosynthesis; dUMP from dCTP (dUTP route): step 2/2. Its function is as follows. Involved in nucleotide metabolism via production of dUMP, the immediate precursor of thymidine nucleotides, and decreases the intracellular concentration of dUTP so that uracil cannot be incorporated into DNA. The sequence is that of Deoxyuridine 5'-triphosphate nucleotidohydrolase (DUT1) from Antonospora locustae (Microsporidian parasite).